Consider the following 401-residue polypeptide: Secreted LysM effector Blys8 (401 aa).

The signal sequence occupies residues 1 to 19; the sequence is MRTLAIFFIGAAVAAHVSP. The LysM 1 domain maps to 42 to 89; that stretch reads TYYDEAYDKSYTCDDLLSAWVISKQDFESWNPAVGSDCKLVLGHSYCV. Low complexity predominate over residues 98 to 136; sequence STTTTTTTSTTTKTTTKTTTTTTAAPKPTSSAPSGPSPT. Positions 98-137 are disordered; that stretch reads STTTTTTTSTTTKTTTKTTTTTTAAPKPTSSAPSGPSPTQ. One can recognise a LysM 2 domain in the interval 146–193; that stretch reads AYYFVKAGDTCDKISQMYGTFSTAQFIEWNPAVGSSCTGLWAGYYYCV. Positions 201-223 are disordered; sequence SRTSTAGPTSTKPANGVTTPQPT. The region spanning 233-279 is the LysM 3 domain; the sequence is QFVYVQPGDQCGTVASRAGVSLSDFLQWNPSTGKDCSGLWANAYACV.

This sequence belongs to the secreted LysM effector family.

Might have a role in sequestration of chitin oligosaccharides (breakdown products of fungal cell walls that are released during invasion and act as triggers of host immunity) to dampen host defense. The sequence is that of Secreted LysM effector Blys8 from Beauveria bassiana (strain ARSEF 2860) (White muscardine disease fungus).